The primary structure comprises 615 residues: 1-deoxy-D-xylulose-5-phosphate synthase (615 aa).

Thiamine diphosphate-binding positions include histidine 72 and glycine 111–serine 113. Mg(2+) is bound at residue aspartate 142. Thiamine diphosphate-binding positions include glycine 143–alanine 144, asparagine 171, tyrosine 278, and glutamate 360. Mg(2+) is bound at residue asparagine 171.

It belongs to the transketolase family. DXPS subfamily. Homodimer. The cofactor is Mg(2+). It depends on thiamine diphosphate as a cofactor.

It catalyses the reaction D-glyceraldehyde 3-phosphate + pyruvate + H(+) = 1-deoxy-D-xylulose 5-phosphate + CO2. Its pathway is metabolic intermediate biosynthesis; 1-deoxy-D-xylulose 5-phosphate biosynthesis; 1-deoxy-D-xylulose 5-phosphate from D-glyceraldehyde 3-phosphate and pyruvate: step 1/1. Catalyzes the acyloin condensation reaction between C atoms 2 and 3 of pyruvate and glyceraldehyde 3-phosphate to yield 1-deoxy-D-xylulose-5-phosphate (DXP). The sequence is that of 1-deoxy-D-xylulose-5-phosphate synthase from Campylobacter jejuni subsp. jejuni serotype O:23/36 (strain 81-176).